Reading from the N-terminus, the 463-residue chain is Probable ECA polymerase (463 aa).

Transmembrane regions (helical) follow at residues 6–26, 39–59, 65–85, 112–132, 154–174, 180–200, 201–221, 222–242, 340–360, 377–397, and 408–428; these read FGGLFVVYLISVIFILSLTWM, FSLLYLLTFYFGFPFTCVLVF, VVPVQFLLQAMLSATAFYAIY, ANLTWLLLALIAVATVGIFFL, GVALKRFFYFFIPAMLVVYFL, AWLMFLIGTVAFGMLTYVIVG, GTRANLIIAFALFLFIGIVRG, WITLWMLVAAGAFGIVGMFWL, LVVMGGVLFIPLGAIAVGLVI, YKAAILQAFCFGAVFNIIVLT, and VVFFCLVFGLCLLVAKLLYWL.

The protein belongs to the WzyE family. As to quaternary structure, probably part of a complex composed of WzxE, WzyE and WzzE.

It is found in the cell inner membrane. It participates in bacterial outer membrane biogenesis; enterobacterial common antigen biosynthesis. In terms of biological role, probably involved in the polymerization of enterobacterial common antigen (ECA) trisaccharide repeat units. The protein is Probable ECA polymerase of Pectobacterium carotovorum subsp. carotovorum (strain PC1).